Here is a 245-residue protein sequence, read N- to C-terminus: tRNA pseudouridine synthase A (245 aa).

Asp52 acts as the Nucleophile in catalysis. Position 111 (Tyr111) interacts with substrate.

Belongs to the tRNA pseudouridine synthase TruA family. As to quaternary structure, homodimer.

It carries out the reaction uridine(38/39/40) in tRNA = pseudouridine(38/39/40) in tRNA. In terms of biological role, formation of pseudouridine at positions 38, 39 and 40 in the anticodon stem and loop of transfer RNAs. This chain is tRNA pseudouridine synthase A, found in Afipia carboxidovorans (strain ATCC 49405 / DSM 1227 / KCTC 32145 / OM5) (Oligotropha carboxidovorans).